The following is a 248-amino-acid chain: UPF0736 protein BCB4264_A1231 (248 aa).

The protein belongs to the UPF0736 family.

This is UPF0736 protein BCB4264_A1231 from Bacillus cereus (strain B4264).